Reading from the N-terminus, the 349-residue chain is Peroxidase 7 (349 aa).

Residues 1–22 (MKLAVVSVVVILGVLVAWPVSA) form the signal peptide. Cystine bridges form between cysteine 60-cysteine 136, cysteine 93-cysteine 98, cysteine 142-cysteine 341, and cysteine 220-cysteine 252. Histidine 91 functions as the Proton acceptor in the catalytic mechanism. Aspartate 92, valine 95, glycine 97, aspartate 99, and serine 101 together coordinate Ca(2+). Proline 183 provides a ligand contact to substrate. Residue histidine 213 coordinates heme b. Residue threonine 214 coordinates Ca(2+). An N-linked (GlcNAc...) asparagine glycan is attached at asparagine 231. 3 residues coordinate Ca(2+): aspartate 262, threonine 265, and aspartate 270.

It belongs to the peroxidase family. Classical plant (class III) peroxidase subfamily. Heme b is required as a cofactor. Requires Ca(2+) as cofactor.

The protein localises to the secreted. The enzyme catalyses 2 a phenolic donor + H2O2 = 2 a phenolic radical donor + 2 H2O. Removal of H(2)O(2), oxidation of toxic reductants, biosynthesis and degradation of lignin, suberization, auxin catabolism, response to environmental stresses such as wounding, pathogen attack and oxidative stress. These functions might be dependent on each isozyme/isoform in each plant tissue. In Arabidopsis thaliana (Mouse-ear cress), this protein is Peroxidase 7 (PER7).